The primary structure comprises 438 residues: 3-phosphoshikimate 1-carboxyvinyltransferase (438 aa).

The 3-phosphoshikimate site is built by Lys23, Ser24, and Arg28. Lys23 is a phosphoenolpyruvate binding site. Residues Gly94 and Arg122 each contribute to the phosphoenolpyruvate site. Positions 167, 169, 321, and 348 each coordinate 3-phosphoshikimate. Gln169 is a binding site for phosphoenolpyruvate. Asp321 acts as the Proton acceptor in catalysis. Residues Arg352 and Arg393 each coordinate phosphoenolpyruvate.

This sequence belongs to the EPSP synthase family. As to quaternary structure, monomer.

It localises to the cytoplasm. It carries out the reaction 3-phosphoshikimate + phosphoenolpyruvate = 5-O-(1-carboxyvinyl)-3-phosphoshikimate + phosphate. It functions in the pathway metabolic intermediate biosynthesis; chorismate biosynthesis; chorismate from D-erythrose 4-phosphate and phosphoenolpyruvate: step 6/7. In terms of biological role, catalyzes the transfer of the enolpyruvyl moiety of phosphoenolpyruvate (PEP) to the 5-hydroxyl of shikimate-3-phosphate (S3P) to produce enolpyruvyl shikimate-3-phosphate and inorganic phosphate. This Helicobacter hepaticus (strain ATCC 51449 / 3B1) protein is 3-phosphoshikimate 1-carboxyvinyltransferase.